A 78-amino-acid chain; its full sequence is DNA-directed RNA polymerase subunit omega (78 aa).

This sequence belongs to the RNA polymerase subunit omega family. In cyanobacteria the RNAP catalytic core is composed of 2 alpha, 1 beta, 1 beta', 1 gamma and 1 omega subunit. When a sigma factor is associated with the core the holoenzyme is formed, which can initiate transcription.

It carries out the reaction RNA(n) + a ribonucleoside 5'-triphosphate = RNA(n+1) + diphosphate. In terms of biological role, promotes RNA polymerase assembly. Latches the N- and C-terminal regions of the beta' subunit thereby facilitating its interaction with the beta and alpha subunits. This is DNA-directed RNA polymerase subunit omega from Prochlorococcus marinus (strain AS9601).